Here is a 276-residue protein sequence, read N- to C-terminus: Large ribosomal subunit protein uL2 (276 aa).

Residues 224–254 (VMNPVDHPHGGGEGRTSGGRHPVTPWGVPTK) form a disordered region.

It belongs to the universal ribosomal protein uL2 family. Part of the 50S ribosomal subunit. Forms a bridge to the 30S subunit in the 70S ribosome.

Its function is as follows. One of the primary rRNA binding proteins. Required for association of the 30S and 50S subunits to form the 70S ribosome, for tRNA binding and peptide bond formation. It has been suggested to have peptidyltransferase activity; this is somewhat controversial. Makes several contacts with the 16S rRNA in the 70S ribosome. In Gluconobacter oxydans (strain 621H) (Gluconobacter suboxydans), this protein is Large ribosomal subunit protein uL2.